The sequence spans 219 residues: Dephospho-CoA kinase (219 aa).

Residues 8–215 enclose the DPCK domain; that stretch reads LVGVTGGIGS…EAAASGPDCQ (208 aa). 16–21 provides a ligand contact to ATP; it reads GSGKST.

Belongs to the CoaE family.

Its subcellular location is the cytoplasm. It catalyses the reaction 3'-dephospho-CoA + ATP = ADP + CoA + H(+). It functions in the pathway cofactor biosynthesis; coenzyme A biosynthesis; CoA from (R)-pantothenate: step 5/5. Catalyzes the phosphorylation of the 3'-hydroxyl group of dephosphocoenzyme A to form coenzyme A. In Chlorobium luteolum (strain DSM 273 / BCRC 81028 / 2530) (Pelodictyon luteolum), this protein is Dephospho-CoA kinase.